Consider the following 408-residue polypeptide: 4-O-methyl-glucuronoyl methylesterase 1 (408 aa).

A signal peptide spans 1–19; the sequence is MASSSRFAALLLLALPALA. Intrachain disulfides connect C31-C65, C218-C354, and C250-C326. A GXSYXG catalytic site motif motif is present at residues 217 to 222; the sequence is GCSRDG. S219 (nucleophile) is an active-site residue. Residues K223, Q265, and E273 each coordinate substrate. N287 carries N-linked (GlcNAc...) asparagine glycosylation. Residue W317 coordinates substrate. N350 carries N-linked (GlcNAc...) asparagine glycosylation. The active-site Proton donor/acceptor is H353. N390, N395, and N401 each carry an N-linked (GlcNAc...) asparagine glycan.

The protein belongs to the carbohydrate esterase 15 (CE15) family.

It localises to the secreted. It catalyses the reaction a 4-O-methyl-alpha-D-glucuronosyl ester derivative + H2O = 4-O-methyl-alpha-D-glucuronate derivative + an alcohol + H(+). In terms of biological role, glucuronoyl esterase which may play a significant role in biomass degradation, as it is considered to disconnect hemicellulose from lignin through the hydrolysis of the ester bond between 4-O-methyl-D-glucuronic acid residues of glucuronoxylans and aromatic alcohols of lignin. Can hydrolyze benzyl glucuronic acid (BnGlcA), allyl glucuronic acid (allylGlcA) and to a lower degree methyl glucuronic acid (MeGlcA) in vitro. The chain is 4-O-methyl-glucuronoyl methylesterase 1 from Wolfiporia cocos (strain MD-104) (Brown rot fungus).